The primary structure comprises 69 residues: Amphipathic peptide CT2 (69 aa).

The signal sequence occupies residues 1–23 (MKTQFVILIVAVVLLQLIANSEA). A Phenylalanine amide modification is found at phenylalanine 36. Residues 40 to 69 (GLRNLDNLDDDIFEPEMSEADLRYLQDLLR) constitute a propeptide that is removed on maturation.

Belongs to the non-disulfide-bridged peptide (NDBP) superfamily. Short antimicrobial peptide (group 4) family. As to expression, expressed by the venom gland.

The protein resides in the secreted. It localises to the target cell membrane. Its function is as follows. Amphipathic peptide that shows antibacterial activities against both Gram-positive (MIC=10 uM, 20 uM and 20 uM against S.aureus, B.subtilis and S.agalactiae, respectively) and Gram-negative bacteria (MIC=20 uM, 10 uM, and 10 uM against E.coli, S.typhi, and P.aeruginosa, respectively). Is mildly hemolytic at its MIC range, but shows a strong cytotoxic activity at higher concentrations, reaching 84% lysis at 50 uM. In Vaejovis mexicanus smithi (Mexican scorpion), this protein is Amphipathic peptide CT2.